Reading from the N-terminus, the 216-residue chain is MNAEQAEQAAPGGLAPAGPRNDYYIPQWEERTSYGVRRVDPYTKLFEDRIIFLGTPVTDDIANAVMAQLLCLQSMDADRQISMYINSPGGSFTAMTAIYDTMNYVRPDIQTICLGMAASAAAVLLAAGAKGQRLSLPNSTVLIHQPAMGQATYGQATDIEILDDEIQRIRKLMENMLATATGQSVEQISKDIDRDKYLTAQGAKEYGLIDDILTSL.

S119 functions as the Nucleophile in the catalytic mechanism. H144 is an active-site residue.

The protein belongs to the peptidase S14 family. Fourteen ClpP subunits assemble into 2 heptameric rings which stack back to back to give a disk-like structure with a central cavity, resembling the structure of eukaryotic proteasomes.

It is found in the cytoplasm. It catalyses the reaction Hydrolysis of proteins to small peptides in the presence of ATP and magnesium. alpha-casein is the usual test substrate. In the absence of ATP, only oligopeptides shorter than five residues are hydrolyzed (such as succinyl-Leu-Tyr-|-NHMec, and Leu-Tyr-Leu-|-Tyr-Trp, in which cleavage of the -Tyr-|-Leu- and -Tyr-|-Trp bonds also occurs).. In terms of biological role, cleaves peptides in various proteins in a process that requires ATP hydrolysis. Has a chymotrypsin-like activity. Plays a major role in the degradation of misfolded proteins. The chain is ATP-dependent Clp protease proteolytic subunit 1 from Cutibacterium acnes (strain DSM 16379 / KPA171202) (Propionibacterium acnes).